A 63-amino-acid chain; its full sequence is Cecropin-A1 (63 aa).

Residues 1–19 form the signal peptide; sequence MNFYNIFVFVALILAITIG. The residue at position 62 (Arg-62) is an Arginine amide.

It belongs to the cecropin family.

The protein resides in the secreted. Cecropins have lytic and antibacterial activity against several Gram-positive and Gram-negative bacteria. The sequence is that of Cecropin-A1 (CecA1) from Drosophila simulans (Fruit fly).